Here is a 483-residue protein sequence, read N- to C-terminus: Regulatory protein ViaA (483 aa).

It belongs to the ViaA family. In terms of assembly, homodimer. Interacts with RavA.

Its subcellular location is the cytoplasm. Component of the RavA-ViaA chaperone complex, which may act on the membrane to optimize the function of some of the respiratory chains. ViaA stimulates the ATPase activity of RavA. The polypeptide is Regulatory protein ViaA (Enterobacter sp. (strain 638)).